The primary structure comprises 585 residues: DNA mismatch repair protein MutL (585 aa).

It belongs to the DNA mismatch repair MutL/HexB family.

In terms of biological role, this protein is involved in the repair of mismatches in DNA. It is required for dam-dependent methyl-directed DNA mismatch repair. May act as a 'molecular matchmaker', a protein that promotes the formation of a stable complex between two or more DNA-binding proteins in an ATP-dependent manner without itself being part of a final effector complex. The chain is DNA mismatch repair protein MutL from Methanoculleus marisnigri (strain ATCC 35101 / DSM 1498 / JR1).